Here is a 306-residue protein sequence, read N- to C-terminus: tRNA pseudouridine synthase B (306 aa).

The active-site Nucleophile is the Asp-46.

The protein belongs to the pseudouridine synthase TruB family. Type 1 subfamily.

It catalyses the reaction uridine(55) in tRNA = pseudouridine(55) in tRNA. Its function is as follows. Responsible for synthesis of pseudouridine from uracil-55 in the psi GC loop of transfer RNAs. This Gluconacetobacter diazotrophicus (strain ATCC 49037 / DSM 5601 / CCUG 37298 / CIP 103539 / LMG 7603 / PAl5) protein is tRNA pseudouridine synthase B.